The sequence spans 192 residues: UPF0312 protein PSPTO_5071 (192 aa).

A signal peptide spans 1-23; sequence MLKKSLAALALGTALLSAGQAMA.

It belongs to the UPF0312 family. Type 1 subfamily.

Its subcellular location is the periplasm. The protein is UPF0312 protein PSPTO_5071 of Pseudomonas syringae pv. tomato (strain ATCC BAA-871 / DC3000).